Consider the following 270-residue polypeptide: Large ribosomal subunit protein uL2c (270 aa).

A disordered region spans residues 221–245 (NPIDHPHGGGEGRAPIGRNQPKTPW).

The protein belongs to the universal ribosomal protein uL2 family. As to quaternary structure, part of the 50S ribosomal subunit.

The protein localises to the plastid. This Cuscuta gronovii (Common dodder) protein is Large ribosomal subunit protein uL2c (rpl2).